A 576-amino-acid chain; its full sequence is Probable proline--tRNA ligase, mitochondrial (576 aa).

Belongs to the class-II aminoacyl-tRNA synthetase family.

It localises to the mitochondrion. The enzyme catalyses tRNA(Pro) + L-proline + ATP = L-prolyl-tRNA(Pro) + AMP + diphosphate. In Saccharomyces cerevisiae (strain ATCC 204508 / S288c) (Baker's yeast), this protein is Probable proline--tRNA ligase, mitochondrial (AIM10).